The primary structure comprises 1240 residues: DNA excision repair protein ERCC-6-like (1240 aa).

Ser-14 is modified (phosphoserine). The TPR 1 repeat unit spans residues 21–54 (YLRYVQEAKEAAKNGDLEESLKLFNLAKDIFPTK). Residues 110-278 (SLYKDGRKGG…WSLFDFACQG (169 aa)) enclose the Helicase ATP-binding domain. 123-130 (DDMGLGKT) is a binding site for ATP. A DEAH box motif is present at residues 229–232 (DEAH). Residues 467–631 (FLMSLLERLQ…FTKQELKELF (165 aa)) enclose the Helicase C-terminal domain. The tract at residues 736-760 (FPSQQKKKGTEFNKPQPQPSRLLTK) is disordered. The segment covering 748–760 (NKPQPQPSRLLTK) has biased composition (polar residues). 2 positions are modified to phosphoserine: Ser-755 and Ser-773. Positions 778 to 813 (DQSAESEPQEHSEVHDVTSLQGSHHFNSTSDAGTIA) are disordered. A compositionally biased stretch (polar residues) spans 795 to 809 (TSLQGSHHFNSTSDA). Ser-821 bears the Phosphoserine mark. The disordered stretch occupies residues 845-879 (QKKGLQASPGQEAPSENLGSFHYLPRESSKASLGP). Residues Ser-966, Ser-998, Ser-1001, and Ser-1021 each carry the phosphoserine modification. The tract at residues 974-1085 (KEKSLQSPAA…EVNTSLHSRR (112 aa)) is disordered. Residues 978–998 (LQSPAANSRAKSALTLSLDSS) show a composition bias toward polar residues. Positions 1049 to 1065 (SVKQFDASTPQSGSNPS) are enriched in polar residues. The residue at position 1057 (Thr-1057) is a Phosphothreonine. Residues Ser-1092 and Ser-1112 each carry the phosphoserine modification. Over residues 1104-1117 (MEERLDNSSEEESE) the composition is skewed to acidic residues. A disordered region spans residues 1104–1185 (MEERLDNSSE…MPDPPQDLAV (82 aa)). The span at 1135 to 1165 (EQPSGATLASGNKSSNLTMSEPTSPAPQSSP) shows a compositional bias: polar residues. The residue at position 1172 (Ser-1172) is a Phosphoserine. The TPR 2 repeat unit spans residues 1191-1224 (YESLVARGKELKECGKIQEALNCLVKALDIKSAD).

It belongs to the SNF2/RAD54 helicase family. As to quaternary structure, interacts with PLK1, which phosphorylates it. Both proteins are mutually dependent on each other for correct subcellular localization. Interacts (via N-terminal TPR repeat) with BEND3 (via BEN domains 1 and 3); the interaction is direct. Post-translationally, phosphorylation by PLK1 prevents the association with chromosome arms and restricts its localization to the kinetochore-centromere region. In terms of tissue distribution, expressed mainly in the neural tube and heart of 10.5 dpc embryo. Significantly down-regulated after alcohol exposure in embryonic brain and heart, but not in embryonic kidney, liver, or lung.

The protein resides in the chromosome. It is found in the centromere. It localises to the kinetochore. The enzyme catalyses ATP + H2O = ADP + phosphate + H(+). In terms of biological role, DNA helicase that acts as a tension sensor that associates with catenated DNA which is stretched under tension until it is resolved during anaphase. Functions as ATP-dependent DNA translocase. Can promote Holliday junction branch migration (in vitro). The chain is DNA excision repair protein ERCC-6-like (Ercc6l) from Mus musculus (Mouse).